A 684-amino-acid polypeptide reads, in one-letter code: 1,4-alpha-glucan-branching enzyme (684 aa).

(1,4-alpha-D-glucosyl)n contacts are provided by tryptophan 88 and lysine 123. The active-site Nucleophile is aspartate 340. The active-site Proton donor is glutamate 395.

Belongs to the glycosyl hydrolase 13 family. GlgB subfamily.

It is found in the cytoplasm. The enzyme catalyses Transfers a segment of a (1-&gt;4)-alpha-D-glucan chain to a primary hydroxy group in a similar glucan chain.. The protein operates within glycan biosynthesis; glycogen biosynthesis. Glycogen-branching enzyme participates in the glycogen biosynthetic process along with glycogenin and glycogen synthase. Generates alpha-1,6-glucosidic branches from alpha-1,4-linked glucose chains, to increase solubility of the glycogen polymer. The sequence is that of 1,4-alpha-glucan-branching enzyme (be1) from Emericella nidulans (strain FGSC A4 / ATCC 38163 / CBS 112.46 / NRRL 194 / M139) (Aspergillus nidulans).